We begin with the raw amino-acid sequence, 126 residues long: uncharacterized protein (126 aa).

The interval 13–45 (VAPKAGREEEQPPPPAGLGCGARGEPGRGPLEH) is disordered.

Its subcellular location is the cytoplasm. It is found in the cytoskeleton. The protein resides in the cilium basal body. This is an uncharacterized protein from Homo sapiens (Human).